The sequence spans 504 residues: Protoporphyrinogen oxidase, mitochondrial (504 aa).

FAD is bound by residues 20-25 (GAGVSG), 43-44 (EA), Lys51, and 65-68 (GANT). Residues 213–232 (SPKNEKKQGPPKTSANKKRQ) form a disordered region. FAD contacts are provided by residues Val264 and 473–475 (LSV).

The protein belongs to the protoporphyrinogen/coproporphyrinogen oxidase family. Protoporphyrinogen oxidase subfamily. Requires FAD as cofactor.

It localises to the mitochondrion. The catalysed reaction is protoporphyrinogen IX + 3 O2 = protoporphyrin IX + 3 H2O2. Its pathway is porphyrin-containing compound metabolism; protoporphyrin-IX biosynthesis; protoporphyrin-IX from protoporphyrinogen-IX: step 1/1. Inhibited by the herbicide acifluorfen. Catalyzes the 6-electron oxidation of protoporphyrinogen-IX to form protoporphyrin-IX. Functionally, provides precursor for the mitochondrial and plastidic heme synthesis and the predominant chlorophyll synthesis in plastids. In Nicotiana tabacum (Common tobacco), this protein is Protoporphyrinogen oxidase, mitochondrial (PPXII).